The sequence spans 179 residues: Nucleoside-triphosphatase THEP1 (179 aa).

ATP-binding positions include G7–T14 and L94–G101.

This sequence belongs to the THEP1 NTPase family.

The enzyme catalyses a ribonucleoside 5'-triphosphate + H2O = a ribonucleoside 5'-diphosphate + phosphate + H(+). Has nucleotide phosphatase activity towards ATP, GTP, CTP, TTP and UTP. May hydrolyze nucleoside diphosphates with lower efficiency. In Thermotoga petrophila (strain ATCC BAA-488 / DSM 13995 / JCM 10881 / RKU-1), this protein is Nucleoside-triphosphatase THEP1.